Here is a 343-residue protein sequence, read N- to C-terminus: Holliday junction branch migration complex subunit RuvB (343 aa).

Residues 1-182 (MRDELLNTPT…FGISNRLDYY (182 aa)) are large ATPase domain (RuvB-L). Residues Ile-21, Arg-22, Gly-63, Lys-66, Thr-67, Thr-68, 129-131 (EDF), Arg-172, Tyr-182, and Arg-219 contribute to the ATP site. Position 67 (Thr-67) interacts with Mg(2+). Positions 183–253 (SAELLQRIII…LARKTLAALE (71 aa)) are small ATPAse domain (RuvB-S). A head domain (RuvB-H) region spans residues 256–343 (EDGLDDMDKK…DGPLFQKGSS (88 aa)). The DNA site is built by Arg-311 and Arg-316.

This sequence belongs to the RuvB family. Homohexamer. Forms an RuvA(8)-RuvB(12)-Holliday junction (HJ) complex. HJ DNA is sandwiched between 2 RuvA tetramers; dsDNA enters through RuvA and exits via RuvB. An RuvB hexamer assembles on each DNA strand where it exits the tetramer. Each RuvB hexamer is contacted by two RuvA subunits (via domain III) on 2 adjacent RuvB subunits; this complex drives branch migration. In the full resolvosome a probable DNA-RuvA(4)-RuvB(12)-RuvC(2) complex forms which resolves the HJ.

It is found in the cytoplasm. It catalyses the reaction ATP + H2O = ADP + phosphate + H(+). In terms of biological role, the RuvA-RuvB-RuvC complex processes Holliday junction (HJ) DNA during genetic recombination and DNA repair, while the RuvA-RuvB complex plays an important role in the rescue of blocked DNA replication forks via replication fork reversal (RFR). RuvA specifically binds to HJ cruciform DNA, conferring on it an open structure. The RuvB hexamer acts as an ATP-dependent pump, pulling dsDNA into and through the RuvAB complex. RuvB forms 2 homohexamers on either side of HJ DNA bound by 1 or 2 RuvA tetramers; 4 subunits per hexamer contact DNA at a time. Coordinated motions by a converter formed by DNA-disengaged RuvB subunits stimulates ATP hydrolysis and nucleotide exchange. Immobilization of the converter enables RuvB to convert the ATP-contained energy into a lever motion, pulling 2 nucleotides of DNA out of the RuvA tetramer per ATP hydrolyzed, thus driving DNA branch migration. The RuvB motors rotate together with the DNA substrate, which together with the progressing nucleotide cycle form the mechanistic basis for DNA recombination by continuous HJ branch migration. Branch migration allows RuvC to scan DNA until it finds its consensus sequence, where it cleaves and resolves cruciform DNA. This is Holliday junction branch migration complex subunit RuvB from Prosthecochloris aestuarii (strain DSM 271 / SK 413).